The sequence spans 237 residues: Phosphoribosylaminoimidazole-succinocarboxamide synthase (237 aa).

Belongs to the SAICAR synthetase family.

The enzyme catalyses 5-amino-1-(5-phospho-D-ribosyl)imidazole-4-carboxylate + L-aspartate + ATP = (2S)-2-[5-amino-1-(5-phospho-beta-D-ribosyl)imidazole-4-carboxamido]succinate + ADP + phosphate + 2 H(+). It functions in the pathway purine metabolism; IMP biosynthesis via de novo pathway; 5-amino-1-(5-phospho-D-ribosyl)imidazole-4-carboxamide from 5-amino-1-(5-phospho-D-ribosyl)imidazole-4-carboxylate: step 1/2. The sequence is that of Phosphoribosylaminoimidazole-succinocarboxamide synthase from Proteus mirabilis (strain HI4320).